We begin with the raw amino-acid sequence, 288 residues long: Ribosomal protein L11 methyltransferase (288 aa).

Thr-141, Gly-164, Asp-186, and Asn-227 together coordinate S-adenosyl-L-methionine.

This sequence belongs to the methyltransferase superfamily. PrmA family.

Its subcellular location is the cytoplasm. The enzyme catalyses L-lysyl-[protein] + 3 S-adenosyl-L-methionine = N(6),N(6),N(6)-trimethyl-L-lysyl-[protein] + 3 S-adenosyl-L-homocysteine + 3 H(+). Functionally, methylates ribosomal protein L11. This Myxococcus xanthus (strain DK1622) protein is Ribosomal protein L11 methyltransferase.